We begin with the raw amino-acid sequence, 197 residues long: Gastrula zinc finger protein XlCGF17.1 (197 aa).

7 C2H2-type zinc fingers span residues 6–28 (ISCSECGKCFIKSSELTVHQMTH), 34–56 (YSCSECGKCFASLSHLRVHQKIH), 62–84 (FSCSECGKCFLNRGSLVRHHRTH), 90–112 (FFCSECGKRFAASSDLRVHRRTH), 118–140 (FSCSECEKRFLNPWSLVRHYRTH), 146–169 (FSCSECGKCFARSSDLTVHRRRSH), and 175–197 (FSCSECGKCFTSSSELTVHLRTH).

This sequence belongs to the krueppel C2H2-type zinc-finger protein family.

The protein localises to the nucleus. In terms of biological role, may be involved in transcriptional regulation. The protein is Gastrula zinc finger protein XlCGF17.1 of Xenopus laevis (African clawed frog).